The chain runs to 303 residues: Probable 5-dehydro-4-deoxyglucarate dehydratase (303 aa).

This sequence belongs to the DapA family.

The enzyme catalyses 5-dehydro-4-deoxy-D-glucarate + H(+) = 2,5-dioxopentanoate + CO2 + H2O. The protein operates within carbohydrate acid metabolism; D-glucarate degradation; 2,5-dioxopentanoate from D-glucarate: step 2/2. The polypeptide is Probable 5-dehydro-4-deoxyglucarate dehydratase (Pseudomonas syringae pv. tomato (strain ATCC BAA-871 / DC3000)).